Here is a 254-residue protein sequence, read N- to C-terminus: Fasciclin-like arabinogalactan protein 7 (254 aa).

The signal sequence occupies residues 1 to 22 (MAKMQLSIFIAVVALIVCSASA). The FAS1 domain occupies 44–186 (NVNLTELLSV…VAVYQVNRVL (143 aa)). Residues asparagine 46, asparagine 78, asparagine 104, and asparagine 130 are each glycosylated (N-linked (GlcNAc...) asparagine). The interval 203 to 233 (APAPIVSAPSDSPSVADSEGASSPKSSHKNS) is disordered. Residues 206 to 220 (PIVSAPSDSPSVADS) are compositionally biased toward low complexity. Positions 222 to 233 (GASSPKSSHKNS) are enriched in polar residues. Asparagine 232 carries GPI-anchor amidated asparagine lipidation. The propeptide at 233–254 (SGQKLLLAPISMVISGLVALFL) is removed in mature form.

The protein belongs to the fasciclin-like AGP family.

It is found in the cell membrane. Its function is as follows. May be a cell surface adhesion protein. This chain is Fasciclin-like arabinogalactan protein 7 (FLA7), found in Arabidopsis thaliana (Mouse-ear cress).